The sequence spans 223 residues: Deoxyribose-phosphate aldolase (223 aa).

D89 acts as the Proton donor/acceptor in catalysis. K154 serves as the catalytic Schiff-base intermediate with acetaldehyde. Catalysis depends on K183, which acts as the Proton donor/acceptor.

It belongs to the DeoC/FbaB aldolase family. DeoC type 1 subfamily.

Its subcellular location is the cytoplasm. The enzyme catalyses 2-deoxy-D-ribose 5-phosphate = D-glyceraldehyde 3-phosphate + acetaldehyde. It functions in the pathway carbohydrate degradation; 2-deoxy-D-ribose 1-phosphate degradation; D-glyceraldehyde 3-phosphate and acetaldehyde from 2-deoxy-alpha-D-ribose 1-phosphate: step 2/2. Catalyzes a reversible aldol reaction between acetaldehyde and D-glyceraldehyde 3-phosphate to generate 2-deoxy-D-ribose 5-phosphate. This chain is Deoxyribose-phosphate aldolase, found in Thermoanaerobacter sp. (strain X514).